The primary structure comprises 443 residues: MSFLWSLGSFIIAIAVLVSVHEYGHFWAARKCGIKVHRFSIGFGKVIWKRIDKYGTEFAVSMIPLGGYVKMLDGRNEVVPAEQKSQAFDSKSVLQRSFVIIAGPLANFIFAIFAYWVIYLYGMPTVKPVIESITPNSIAAQAHIEPNTQILTIDGEETQDWETINMLLATKMGEPNVEISLSPFNSNIEQQRTLNLTNWTFDPEKESAFEALGIMPMRPKIEMVLSKVVQNSPAEKAGLQIGDKILKENLTALPWQDFIKQVEQGESFSIKVERNGETFDKVLTPVRNQNGKWFVGVSPALTKLADEYRTELKYGILESLQKGIEKTGQLSLLTLKILGKLLTGDLSLNNLSGPISIAKGAGASANIGLVYFLSFMALISVNLGIMNLFPLPVLDGGHLVFLTMEAVKGKPVSERVQSICYRIGAALLLSLTVFALFNDFLRL.

Position 21 (H21) interacts with Zn(2+). E22 is an active-site residue. Residue H25 participates in Zn(2+) binding. Residues F98–I118 form a helical membrane-spanning segment. PDZ domains lie at A106–N185 and N198–R287. Helical transmembrane passes span L369 to F389 and I423 to L443.

This sequence belongs to the peptidase M50B family. As to quaternary structure, interacts with RseA. Zn(2+) serves as cofactor.

The protein localises to the cell inner membrane. A site-2 regulated intramembrane protease (S2P) that cleaves a peptide bond in the transmembrane region of RseA. Part of a regulated intramembrane proteolysis (RIP) cascade. Acts on DegS-cleaved RseA to release the cytoplasmic domain of RseA. This provides the cell with sigma-E (RpoE) activity through the proteolysis of RseA. This is Regulator of sigma E protease (rsep) from Haemophilus influenzae (strain ATCC 51907 / DSM 11121 / KW20 / Rd).